The following is a 461-amino-acid chain: CASP-like protein 4U1 (461 aa).

Positions 1 to 239 (MASTPRTPAP…RAAETKLPLS (239 aa)) are disordered. The Cytoplasmic segment spans residues 1 to 314 (MASTPRTPAP…AAVAVGERRE (314 aa)). Over residues 7–69 (TPAPVRSPPP…PLETPPPPSP (63 aa)) the composition is skewed to pro residues. 2 stretches are compositionally biased toward low complexity: residues 116–126 (LSPMRLAAPRL) and 135–155 (TPTG…AAAG). Positions 193 to 204 (SPSPSPTPPSPL) are enriched in pro residues. Positions 205–221 (TPAAAPVVNNNSNNKNN) are enriched in low complexity. The helical transmembrane segment at 315–335 (LSVTLRLATAVLSLAAFSVIA) threads the bilayer. Residues 336–354 (SARTSGWAGDYYAHHLQYR) are Extracellular-facing. A helical transmembrane segment spans residues 355 to 375 (YAVAVNVIVCAYSIAQSFGEI). At 376 to 392 (RRLISPRFIFRSMSSYY) the chain is on the cytoplasmic side. A helical transmembrane segment spans residues 393-413 (CSLFLDQALAYLLMSASSAAA). Residues 414 to 431 (SRNDLWVSRFGTDAFNRK) are Extracellular-facing. Residues 432 to 452 (ITSALWLSFIAFLMLALNALI) form a helical membrane-spanning segment. Topologically, residues 453-461 (STANLFSML) are cytoplasmic.

It belongs to the Casparian strip membrane proteins (CASP) family. Homodimer and heterodimers.

The protein resides in the cell membrane. This Sorghum bicolor (Sorghum) protein is CASP-like protein 4U1.